Consider the following 394-residue polypeptide: Ornithine aminotransferase 1 (394 aa).

Residue K252 is modified to N6-(pyridoxal phosphate)lysine.

It belongs to the class-III pyridoxal-phosphate-dependent aminotransferase family. OAT subfamily. Pyridoxal 5'-phosphate is required as a cofactor.

The protein resides in the cytoplasm. The enzyme catalyses a 2-oxocarboxylate + L-ornithine = L-glutamate 5-semialdehyde + an L-alpha-amino acid. The protein operates within amino-acid biosynthesis; L-proline biosynthesis; L-glutamate 5-semialdehyde from L-ornithine: step 1/1. Catalyzes the interconversion of ornithine to glutamate semialdehyde. This Staphylococcus aureus (strain COL) protein is Ornithine aminotransferase 1.